The primary structure comprises 170 residues: Adenine phosphoribosyltransferase (170 aa).

The protein belongs to the purine/pyrimidine phosphoribosyltransferase family. Homodimer.

It localises to the cytoplasm. It catalyses the reaction AMP + diphosphate = 5-phospho-alpha-D-ribose 1-diphosphate + adenine. The protein operates within purine metabolism; AMP biosynthesis via salvage pathway; AMP from adenine: step 1/1. Its function is as follows. Catalyzes a salvage reaction resulting in the formation of AMP, that is energically less costly than de novo synthesis. The protein is Adenine phosphoribosyltransferase of Maridesulfovibrio salexigens (strain ATCC 14822 / DSM 2638 / NCIMB 8403 / VKM B-1763) (Desulfovibrio salexigens).